A 150-amino-acid chain; its full sequence is D-aminoacyl-tRNA deacylase (150 aa).

The short motif at 133 to 134 is the Gly-cisPro motif, important for rejection of L-amino acids element; that stretch reads GP.

Belongs to the DTD family. In terms of assembly, homodimer.

The protein localises to the cytoplasm. It catalyses the reaction glycyl-tRNA(Ala) + H2O = tRNA(Ala) + glycine + H(+). It carries out the reaction a D-aminoacyl-tRNA + H2O = a tRNA + a D-alpha-amino acid + H(+). An aminoacyl-tRNA editing enzyme that deacylates mischarged D-aminoacyl-tRNAs. Also deacylates mischarged glycyl-tRNA(Ala), protecting cells against glycine mischarging by AlaRS. Acts via tRNA-based rather than protein-based catalysis; rejects L-amino acids rather than detecting D-amino acids in the active site. By recycling D-aminoacyl-tRNA to D-amino acids and free tRNA molecules, this enzyme counteracts the toxicity associated with the formation of D-aminoacyl-tRNA entities in vivo and helps enforce protein L-homochirality. In Micrococcus luteus (strain ATCC 4698 / DSM 20030 / JCM 1464 / CCM 169 / CCUG 5858 / IAM 1056 / NBRC 3333 / NCIMB 9278 / NCTC 2665 / VKM Ac-2230) (Micrococcus lysodeikticus), this protein is D-aminoacyl-tRNA deacylase.